Here is a 515-residue protein sequence, read N- to C-terminus: Adenine DNA glycosylase (515 aa).

The segment covering 1–24 (MKKLQASVRSHKKQPANHKRRRTR) has biased composition (basic residues). The disordered stretch occupies residues 1 to 38 (MKKLQASVRSHKKQPANHKRRRTRALSSSQAKPSSLDG). Glu-105 acts as the Proton donor/acceptor in catalysis. 4 residues coordinate [4Fe-4S] cluster: Cys-261, Cys-268, Cys-271, and Cys-277. The Nudix hydrolase domain maps to 335–466 (PREEYSATCV…AMKKVFRMYE (132 aa)). The short motif at 376 to 398 (VTLEPSEQHQHKALLQELQRWCG) is the Nudix box element. Residues 468 to 494 (HRQGTRKGSKRSQVCPPSSRKKPSLGQ) form a disordered region.

The protein belongs to the Nth/MutY family. [4Fe-4S] cluster serves as cofactor. In terms of tissue distribution, expressed in heart, lung, liver, intestine, brain and thymus.

Its subcellular location is the nucleus. The protein localises to the mitochondrion. The enzyme catalyses Hydrolyzes free adenine bases from 7,8-dihydro-8-oxoguanine:adenine mismatched double-stranded DNA, leaving an apurinic site.. In terms of biological role, involved in oxidative DNA damage repair. Initiates repair of A*oxoG to C*G by removing the inappropriately paired adenine base from the DNA backbone. Possesses both adenine and 2-OH-A DNA glycosylase activities. This is Adenine DNA glycosylase (Mutyh) from Mus musculus (Mouse).